The primary structure comprises 127 residues: Large ribosomal subunit protein bL17 (127 aa).

Belongs to the bacterial ribosomal protein bL17 family. Part of the 50S ribosomal subunit. Contacts protein L32.

This is Large ribosomal subunit protein bL17 from Stenotrophomonas maltophilia (strain R551-3).